Here is a 149-residue protein sequence, read N- to C-terminus: Leghemoglobin (149 aa).

In terms of domain architecture, Globin spans 3–147 (AFSEKQESLV…LAAAIKKAMG (145 aa)). Tyr31 is subject to Nitrated tyrosine. Position 46 (Ser46) interacts with heme b. Ser46 carries the post-translational modification Phosphoserine. Residue His62 coordinates O2. Heme b contacts are provided by Lys65, His94, and Lys97. A Nitrated tyrosine modification is found at Tyr135.

Belongs to the plant globin family. In terms of assembly, monomer. In terms of processing, nitrated in effective nodules and particularly in hypoxic conditions; this mechanism may play a protective role in the symbiosis by buffering toxic peroxynitrite NO(2)(-). Nitration level decrease during nodule senescence. Phosphorylation at Ser-46 disrupts the molecular environment of its porphyrin ring oxygen binding pocket, thus leading to a reduced oxygen consumption and to the delivery of oxygen O(2) to symbiosomes. In terms of tissue distribution, root nodules.

Its subcellular location is the cytoplasm. The protein localises to the cytosol. It is found in the nucleus. Leghemoglobin that reversibly binds oxygen O(2) through a pentacoordinated heme iron. In root nodules, facilitates the diffusion of oxygen to the bacteroids while preventing the bacterial nitrogenase from being inactivated by buffering dioxygen, nitric oxide and carbon monoxide, and promoting the formation of reactive oxygen species (ROS, e.g. H(2)O(2)). This role is essential for symbiotic nitrogen fixation (SNF). The sequence is that of Leghemoglobin from Canavalia lineata (Beach bean).